The sequence spans 197 residues: Imidazoleglycerol-phosphate dehydratase (197 aa).

The protein belongs to the imidazoleglycerol-phosphate dehydratase family.

The protein localises to the cytoplasm. It catalyses the reaction D-erythro-1-(imidazol-4-yl)glycerol 3-phosphate = 3-(imidazol-4-yl)-2-oxopropyl phosphate + H2O. It functions in the pathway amino-acid biosynthesis; L-histidine biosynthesis; L-histidine from 5-phospho-alpha-D-ribose 1-diphosphate: step 6/9. The protein is Imidazoleglycerol-phosphate dehydratase (hisB) of Streptomyces coelicolor (strain ATCC BAA-471 / A3(2) / M145).